The chain runs to 381 residues: Alcohol dehydrogenase-like 6 (381 aa).

Positions 53, 55, 72, 102, 105, 108, 116, and 179 each coordinate Zn(2+). Residues S55 and H72 each contribute to the an alcohol site. S55 provides a ligand contact to NAD(+). Residues 204 to 209 (GLGTVG), D228, K233, 297 to 299 (LGV), F324, and R374 contribute to the NAD(+) site.

This sequence belongs to the zinc-containing alcohol dehydrogenase family. Class-III subfamily. In terms of assembly, homodimer. Zn(2+) is required as a cofactor.

The protein localises to the cytoplasm. It carries out the reaction a primary alcohol + NAD(+) = an aldehyde + NADH + H(+). It catalyses the reaction a secondary alcohol + NAD(+) = a ketone + NADH + H(+). The protein is Alcohol dehydrogenase-like 6 of Arabidopsis thaliana (Mouse-ear cress).